The sequence spans 333 residues: D-threonate 4-phosphate dehydrogenase (333 aa).

2 residues coordinate substrate: His140 and Thr141. Residues His170, His214, and His270 each coordinate a divalent metal cation. The substrate site is built by Lys278, Asn287, and Arg296.

The protein belongs to the PdxA family. PdxA2 subfamily. In terms of assembly, homodimer. A divalent metal cation is required as a cofactor.

The catalysed reaction is 4-O-phospho-D-threonate + NAD(+) = dihydroxyacetone phosphate + CO2 + NADH. In terms of biological role, catalyzes the NAD-dependent oxidation and subsequent decarboxylation of D-threonate 4-phosphate to produce dihydroxyacetone phosphate (DHAP). Can also use 4-hydroxy-L-threonine 4-phosphate as substrate. The protein is D-threonate 4-phosphate dehydrogenase of Cupriavidus necator (strain ATCC 17699 / DSM 428 / KCTC 22496 / NCIMB 10442 / H16 / Stanier 337) (Ralstonia eutropha).